The chain runs to 446 residues: Actin-related protein 6 (446 aa).

A compositionally biased stretch (basic residues) spans 1–11 (MTGRGGAKKSR). A disordered region spans residues 1–24 (MTGRGGAKKSRAAGPAPPTTTLVL).

It belongs to the actin family. ARP6 subfamily. In terms of assembly, component of the SWR1 chromatin remodeling complex.

The protein resides in the cytoplasm. The protein localises to the cytoskeleton. It localises to the nucleus. Its function is as follows. Component of the SWR1 complex which mediates the ATP-dependent exchange of histone H2A for the H2A variant H2A.Z leading to transcriptional regulation of selected genes by chromatin remodeling. Involved in chromosome stability. This Neurospora crassa (strain ATCC 24698 / 74-OR23-1A / CBS 708.71 / DSM 1257 / FGSC 987) protein is Actin-related protein 6 (arp-6).